The following is a 295-amino-acid chain: Ribosomal RNA small subunit methyltransferase A (295 aa).

S-adenosyl-L-methionine-binding residues include asparagine 33, valine 35, glycine 60, glutamate 81, aspartate 111, and asparagine 129.

Belongs to the class I-like SAM-binding methyltransferase superfamily. rRNA adenine N(6)-methyltransferase family. RsmA subfamily.

It is found in the cytoplasm. It catalyses the reaction adenosine(1518)/adenosine(1519) in 16S rRNA + 4 S-adenosyl-L-methionine = N(6)-dimethyladenosine(1518)/N(6)-dimethyladenosine(1519) in 16S rRNA + 4 S-adenosyl-L-homocysteine + 4 H(+). In terms of biological role, specifically dimethylates two adjacent adenosines (A1518 and A1519) in the loop of a conserved hairpin near the 3'-end of 16S rRNA in the 30S particle. May play a critical role in biogenesis of 30S subunits. In Streptomyces avermitilis (strain ATCC 31267 / DSM 46492 / JCM 5070 / NBRC 14893 / NCIMB 12804 / NRRL 8165 / MA-4680), this protein is Ribosomal RNA small subunit methyltransferase A.